A 344-amino-acid polypeptide reads, in one-letter code: MIEINRVNKIFYQGAKEINALKDINLHIAQGTIFGVIGSSGAGKSTLIRCVNMLERPTNGEVVVDGVDLTKLSSSELSKARRNIGMIFQHFNLLASRTVFDNVALPLELAGKSKHDIQKKVTELLDLVGLADKHHTYPANLSGGQKQRVAIARALSTDPKVLLCDEATSALDPATTKSILELIKDLNRKLSITILIITHEMEVVKNICHEVAIIGGGELVEKGAVSDIFAHPKTALAQEFIRATLDLSIPEDFKARLKDTYVEGSYPLIRLEFTGSTVDAPVISQISREFDIDISILSSDIDYAGGVKFGLMLAEVFGNQESTQKAIEFLRNHHVKVEVLGYVV.

In terms of domain architecture, ABC transporter spans 2–241; sequence IEINRVNKIF…PKTALAQEFI (240 aa). 38–45 contacts ATP; that stretch reads GSSGAGKS.

The protein belongs to the ABC transporter superfamily. Methionine importer (TC 3.A.1.24) family. As to quaternary structure, the complex is composed of two ATP-binding proteins (MetN), two transmembrane proteins (MetI) and a solute-binding protein (MetQ).

It localises to the cell inner membrane. The enzyme catalyses L-methionine(out) + ATP + H2O = L-methionine(in) + ADP + phosphate + H(+). The catalysed reaction is D-methionine(out) + ATP + H2O = D-methionine(in) + ADP + phosphate + H(+). In terms of biological role, part of the ABC transporter complex MetNIQ involved in methionine import. Responsible for energy coupling to the transport system. The polypeptide is Methionine import ATP-binding protein MetN (Aliivibrio fischeri (strain ATCC 700601 / ES114) (Vibrio fischeri)).